Consider the following 400-residue polypeptide: Acetate kinase (400 aa).

Residue asparagine 10 participates in Mg(2+) binding. Lysine 17 is an ATP binding site. Residue arginine 91 coordinates substrate. Aspartate 148 serves as the catalytic Proton donor/acceptor. Residues 208–212 (HLGNG), 283–285 (DCR), and 331–335 (GIGEN) each bind ATP. Glutamate 385 provides a ligand contact to Mg(2+).

Belongs to the acetokinase family. As to quaternary structure, homodimer. Requires Mg(2+) as cofactor. It depends on Mn(2+) as a cofactor.

Its subcellular location is the cytoplasm. It carries out the reaction acetate + ATP = acetyl phosphate + ADP. Its pathway is metabolic intermediate biosynthesis; acetyl-CoA biosynthesis; acetyl-CoA from acetate: step 1/2. Functionally, catalyzes the formation of acetyl phosphate from acetate and ATP. Can also catalyze the reverse reaction. This is Acetate kinase from Shewanella putrefaciens (strain CN-32 / ATCC BAA-453).